The primary structure comprises 236 residues: Ubiquinone biosynthesis O-methyltransferase (236 aa).

S-adenosyl-L-methionine-binding residues include arginine 39, glycine 59, aspartate 80, and methionine 124.

It belongs to the methyltransferase superfamily. UbiG/COQ3 family.

The catalysed reaction is a 3-demethylubiquinol + S-adenosyl-L-methionine = a ubiquinol + S-adenosyl-L-homocysteine + H(+). It catalyses the reaction a 3-(all-trans-polyprenyl)benzene-1,2-diol + S-adenosyl-L-methionine = a 2-methoxy-6-(all-trans-polyprenyl)phenol + S-adenosyl-L-homocysteine + H(+). It functions in the pathway cofactor biosynthesis; ubiquinone biosynthesis. Its function is as follows. O-methyltransferase that catalyzes the 2 O-methylation steps in the ubiquinone biosynthetic pathway. The chain is Ubiquinone biosynthesis O-methyltransferase from Shewanella sp. (strain MR-7).